A 1034-amino-acid polypeptide reads, in one-letter code: Translation initiation factor IF-2 (1034 aa).

Disordered regions lie at residues 118–140 (AAEA…QSVE) and 154–446 (EAEA…NESA). Composition is skewed to low complexity over residues 162–178 (TPPV…AAAP) and 212–228 (PAVK…PAAS). Positions 304–315 (DRAREDARRAAE) are enriched in basic and acidic residues. Residues 535–702 (PRAPVVTVMG…NVLLQAEILE (168 aa)) enclose the tr-type G domain. The tract at residues 544–551 (GHVDHGKT) is G1. A GTP-binding site is contributed by 544 to 551 (GHVDHGKT). The tract at residues 569 to 573 (GITQH) is G2. Residues 590-593 (DTPG) are G3. Residues 590 to 594 (DTPGH) and 644 to 647 (NKID) each bind GTP. Residues 644 to 647 (NKID) form a G4 region. A G5 region spans residues 680 to 682 (SAK).

Belongs to the TRAFAC class translation factor GTPase superfamily. Classic translation factor GTPase family. IF-2 subfamily.

The protein resides in the cytoplasm. Its function is as follows. One of the essential components for the initiation of protein synthesis. Protects formylmethionyl-tRNA from spontaneous hydrolysis and promotes its binding to the 30S ribosomal subunits. Also involved in the hydrolysis of GTP during the formation of the 70S ribosomal complex. The protein is Translation initiation factor IF-2 of Bordetella avium (strain 197N).